Reading from the N-terminus, the 221-residue chain is Transcription factor MYB1 (221 aa).

2 HTH myb-type domains span residues 1-57 and 58-112; these read MESV…LNYL and RPNI…QKKL. DNA-binding regions (H-T-H motif) lie at residues 33–57 and 85–108; these read WHQV…LNYL and WSLI…NTHL. A disordered region spans residues 126 to 154; the sequence is KTIVPKGTEAQPRAHPKSPPRPSPPSNNE.

As to expression, expressed in stems and leaves. Expressed at low levels in ovaries.

Its subcellular location is the nucleus. Its function is as follows. Transcription activator involved in the regulation of anthocyanin biosynthesis in red-fleshed kiwifruit varieties. Activates the transcription of genes involved in anthocyanin biosynthesis, such as dihydroflavonol reductase (DFR), anthocyanidin synthase (ANS) and UDP flavonoid glycosyltransferase (UFGT). The protein is Transcription factor MYB1 of Actinidia chinensis var. chinensis (Chinese soft-hair kiwi).